A 160-amino-acid chain; its full sequence is Nutritionally-regulated adipose and cardiac enriched protein homolog (160 aa).

The interval 1–69 (MRTAAGAVSP…AKPQRTSRRV (69 aa)) is disordered. 2 stretches are compositionally biased toward basic and acidic residues: residues 12–25 (SRPE…KNEE) and 33–42 (CRAEREDNRK). A helical membrane pass occupies residues 101–121 (GGSLLLQLCVCVLLVLALGLY).

It localises to the cell membrane. This Homo sapiens (Human) protein is Nutritionally-regulated adipose and cardiac enriched protein homolog (NRAC).